Reading from the N-terminus, the 432-residue chain is Anaerobic glycerol-3-phosphate dehydrogenase subunit B (432 aa).

This sequence belongs to the anaerobic G-3-P dehydrogenase subunit B family. As to quaternary structure, composed of a catalytic GlpA/B dimer and of membrane bound GlpC. FMN is required as a cofactor.

It carries out the reaction a quinone + sn-glycerol 3-phosphate = dihydroxyacetone phosphate + a quinol. It participates in polyol metabolism; glycerol degradation via glycerol kinase pathway; glycerone phosphate from sn-glycerol 3-phosphate (anaerobic route): step 1/1. Conversion of glycerol 3-phosphate to dihydroxyacetone. Uses fumarate or nitrate as electron acceptor. The polypeptide is Anaerobic glycerol-3-phosphate dehydrogenase subunit B (glpB) (Haemophilus influenzae (strain ATCC 51907 / DSM 11121 / KW20 / Rd)).